Here is a 181-residue protein sequence, read N- to C-terminus: Iron sulfur cluster assembly protein 1, mitochondrial (181 aa).

The tract at residues 159–181 is disordered; sequence RKTKNPTLGAEAAETPAAATATA. Positions 168–181 are enriched in low complexity; that stretch reads AEAAETPAAATATA.

Belongs to the NifU family. In terms of assembly, component of the core Fe-S cluster (ISC) assembly machinery. The cofactor is [2Fe-2S] cluster.

Its subcellular location is the mitochondrion matrix. Its pathway is cofactor biosynthesis; iron-sulfur cluster biosynthesis. Scaffold protein for the de novo synthesis of iron-sulfur (Fe-S) clusters within mitochondria, which is required for maturation of both mitochondrial and cytoplasmic [2Fe-2S] and [4Fe-4S] proteins. First, a [2Fe-2S] cluster is transiently assembled on the scaffold protein ISU1. In a second step, the cluster is released from ISU1, transferred to a glutaredoxin, followed by the formation of mitochondrial [2Fe-2S] proteins, the synthesis of [4Fe-4S] clusters and their target-specific insertion into the recipient apoproteins. Cluster assembly on ISU1 depends on the function of the cysteine desulfurase complex NFS1-ISD11, which serves as the sulfur donor for cluster synthesis, the iron-binding protein frataxin as the putative iron donor, and the electron transfer chain comprised of ferredoxin reductase and ferredoxin, which receive their electrons from NADH. The polypeptide is Iron sulfur cluster assembly protein 1, mitochondrial (ISU1) (Yarrowia lipolytica (strain CLIB 122 / E 150) (Yeast)).